A 479-amino-acid polypeptide reads, in one-letter code: Adenosylhomocysteinase (479 aa).

Residues threonine 56, aspartate 133, and glutamate 199 each contribute to the substrate site. Position 200-202 (200-202) interacts with NAD(+); it reads TTT. Lysine 229 and aspartate 233 together coordinate substrate. NAD(+) is bound by residues asparagine 234, 263–268, glutamate 286, asparagine 321, 342–344, and asparagine 390; these read GYGDVG and IGH.

It belongs to the adenosylhomocysteinase family. Homotetramer. The cofactor is NAD(+).

The catalysed reaction is S-adenosyl-L-homocysteine + H2O = L-homocysteine + adenosine. It participates in amino-acid biosynthesis; L-homocysteine biosynthesis; L-homocysteine from S-adenosyl-L-homocysteine: step 1/1. In terms of biological role, adenosylhomocysteine is a competitive inhibitor of S-adenosyl-L-methionine-dependent methyl transferase reactions; therefore adenosylhomocysteinase may play a key role in the control of methylations via regulation of the intracellular concentration of adenosylhomocysteine. The chain is Adenosylhomocysteinase from Plasmodium yoelii yoelii.